The primary structure comprises 90 residues: UPF0235 protein CPn_0497/CP_0257/CPj0497/CpB0517 (90 aa).

This sequence belongs to the UPF0235 family.

The polypeptide is UPF0235 protein CPn_0497/CP_0257/CPj0497/CpB0517 (Chlamydia pneumoniae (Chlamydophila pneumoniae)).